A 602-amino-acid polypeptide reads, in one-letter code: Isocyanide synthase A (602 aa).

Belongs to the isocyanide synthase family.

Isocyanide synthase involved in the biosynthesis of isocyanides (or isonitriles), a class of microbial secondary metabolites. The presence of an isonitrile moiety within a compound imparts unique biological (cytotoxic, antibacterial, and antiprotozoal) and chemical (transition metal coordination) properties and enables synthetic and biochemical applications. This is Isocyanide synthase A from Aspergillus fumigatus (strain ATCC MYA-4609 / CBS 101355 / FGSC A1100 / Af293) (Neosartorya fumigata).